Here is a 258-residue protein sequence, read N- to C-terminus: Ubiquinone/menaquinone biosynthesis C-methyltransferase UbiE (258 aa).

The interval 1–21 is disordered; it reads MPESRTSADGGMETSYGFREV. Residues threonine 81, aspartate 102, and 130 to 131 each bind S-adenosyl-L-methionine; that span reads NA.

This sequence belongs to the class I-like SAM-binding methyltransferase superfamily. MenG/UbiE family.

It catalyses the reaction a 2-demethylmenaquinol + S-adenosyl-L-methionine = a menaquinol + S-adenosyl-L-homocysteine + H(+). The catalysed reaction is a 2-methoxy-6-(all-trans-polyprenyl)benzene-1,4-diol + S-adenosyl-L-methionine = a 5-methoxy-2-methyl-3-(all-trans-polyprenyl)benzene-1,4-diol + S-adenosyl-L-homocysteine + H(+). The protein operates within quinol/quinone metabolism; menaquinone biosynthesis; menaquinol from 1,4-dihydroxy-2-naphthoate: step 2/2. It participates in cofactor biosynthesis; ubiquinone biosynthesis. Functionally, methyltransferase required for the conversion of demethylmenaquinol (DMKH2) to menaquinol (MKH2) and the conversion of 2-polyprenyl-6-methoxy-1,4-benzoquinol (DDMQH2) to 2-polyprenyl-3-methyl-6-methoxy-1,4-benzoquinol (DMQH2). The sequence is that of Ubiquinone/menaquinone biosynthesis C-methyltransferase UbiE from Rhizobium leguminosarum bv. trifolii (strain WSM2304).